Here is a 335-residue protein sequence, read N- to C-terminus: GTPase Obg (335 aa).

The region spanning 1-158 (MFLDQITIEL…RQVELELKLI (158 aa)) is the Obg domain. The 176-residue stretch at 159-334 (ADIGLVGFPN…LNSLFTNRLS (176 aa)) folds into the OBG-type G domain. Residues 165 to 172 (GFPNAGKS), 190 to 194 (FTTLQ), 215 to 218 (DIPG), 285 to 288 (NKID), and 315 to 317 (SGL) each bind GTP. Mg(2+)-binding residues include serine 172 and threonine 192.

Belongs to the TRAFAC class OBG-HflX-like GTPase superfamily. OBG GTPase family. As to quaternary structure, monomer. Mg(2+) is required as a cofactor.

The protein resides in the cytoplasm. Functionally, an essential GTPase which binds GTP, GDP and possibly (p)ppGpp with moderate affinity, with high nucleotide exchange rates and a fairly low GTP hydrolysis rate. Plays a role in control of the cell cycle, stress response, ribosome biogenesis and in those bacteria that undergo differentiation, in morphogenesis control. The protein is GTPase Obg of Chlamydia caviae (strain ATCC VR-813 / DSM 19441 / 03DC25 / GPIC) (Chlamydophila caviae).